A 291-amino-acid chain; its full sequence is Nucleotide-binding protein Lm4b_02443 (291 aa).

13-20 (GMSGAGKT) is a binding site for ATP. Residue 63–66 (DLRG) participates in GTP binding.

Belongs to the RapZ-like family.

Its function is as follows. Displays ATPase and GTPase activities. The polypeptide is Nucleotide-binding protein Lm4b_02443 (Listeria monocytogenes serotype 4b (strain CLIP80459)).